A 57-amino-acid chain; its full sequence is Zinc finger protein MJ0458.1 (57 aa).

4 short sequence motifs (c(P)XCG motif) span residues 8 to 12, 26 to 30, 37 to 41, and 49 to 53; these read CISCN, CPNCG, CERCR, and CPKCG. 2 residues coordinate Zn(2+): Cys26 and Cys29. Zn(2+)-binding residues include Cys49 and Cys52.

As to quaternary structure, monomer in solution.

Its function is as follows. Zinc-binding protein that binds only one zinc ion. The chain is Zinc finger protein MJ0458.1 from Methanocaldococcus jannaschii (strain ATCC 43067 / DSM 2661 / JAL-1 / JCM 10045 / NBRC 100440) (Methanococcus jannaschii).